A 491-amino-acid polypeptide reads, in one-letter code: Glutamyl-tRNA(Gln) amidotransferase subunit A (491 aa).

Active-site charge relay system residues include Lys-76 and Ser-154. The active-site Acyl-ester intermediate is Ser-178.

It belongs to the amidase family. GatA subfamily. Heterotrimer of A, B and C subunits.

It catalyses the reaction L-glutamyl-tRNA(Gln) + L-glutamine + ATP + H2O = L-glutaminyl-tRNA(Gln) + L-glutamate + ADP + phosphate + H(+). Its function is as follows. Allows the formation of correctly charged Gln-tRNA(Gln) through the transamidation of misacylated Glu-tRNA(Gln) in organisms which lack glutaminyl-tRNA synthetase. The reaction takes place in the presence of glutamine and ATP through an activated gamma-phospho-Glu-tRNA(Gln). This Cereibacter sphaeroides (strain ATCC 17025 / ATH 2.4.3) (Rhodobacter sphaeroides) protein is Glutamyl-tRNA(Gln) amidotransferase subunit A.